We begin with the raw amino-acid sequence, 89 residues long: Small ribosomal subunit protein uS15 (89 aa).

The protein belongs to the universal ribosomal protein uS15 family. In terms of assembly, part of the 30S ribosomal subunit. Forms a bridge to the 50S subunit in the 70S ribosome, contacting the 23S rRNA.

Its function is as follows. One of the primary rRNA binding proteins, it binds directly to 16S rRNA where it helps nucleate assembly of the platform of the 30S subunit by binding and bridging several RNA helices of the 16S rRNA. Forms an intersubunit bridge (bridge B4) with the 23S rRNA of the 50S subunit in the ribosome. This chain is Small ribosomal subunit protein uS15, found in Cyanothece sp. (strain PCC 7425 / ATCC 29141).